A 78-amino-acid chain; its full sequence is Putative membrane protein insertion efficiency factor (78 aa).

The protein belongs to the UPF0161 family.

The protein resides in the cell inner membrane. Functionally, could be involved in insertion of integral membrane proteins into the membrane. The sequence is that of Putative membrane protein insertion efficiency factor from Prochlorococcus marinus (strain MIT 9301).